Consider the following 101-residue polypeptide: Urease subunit beta (101 aa).

The protein belongs to the urease beta subunit family. Heterotrimer of UreA (gamma), UreB (beta) and UreC (alpha) subunits. Three heterotrimers associate to form the active enzyme.

The protein resides in the cytoplasm. The enzyme catalyses urea + 2 H2O + H(+) = hydrogencarbonate + 2 NH4(+). It functions in the pathway nitrogen metabolism; urea degradation; CO(2) and NH(3) from urea (urease route): step 1/1. This is Urease subunit beta from Sinorhizobium medicae (strain WSM419) (Ensifer medicae).